The primary structure comprises 811 residues: Actin filament-associated protein 1-like 2 (811 aa).

Disordered stretches follow at residues 67–110 (KEAQ…PPPK) and 132–168 (EPYN…QQHQ). A PH 1 domain is found at 181–277 (DAMICAFLWR…WLKVIQDISG (97 aa)). The segment at 294–326 (QRQIHPKAEGTDRHSGASESGSSTDGHPETPEI) is disordered. Residues 299–309 (PKAEGTDRHSG) show a composition bias toward basic and acidic residues. The PH 2 domain occupies 359–453 (ALETSNYLNV…WLGLLLLESG (95 aa)). 2 disordered regions span residues 500–532 (RGQR…GEAE) and 558–631 (LGSP…KERV). Composition is skewed to basic and acidic residues over residues 521-532 (DEPKSEEKGEAE), 566-577 (VSGKKDNEESER), and 622-631 (RLEKSNKERV). Residues 642-737 (LLGKNRTEAE…KENLRKAELG (96 aa)) are a coiled coil.

In terms of assembly, interacts with src.

It is found in the cytoplasm. May play a role in a signaling cascade by enhancing the kinase activity of src. Contributes to src-regulated transcription activation. This is Actin filament-associated protein 1-like 2 (afap1l2) from Xenopus laevis (African clawed frog).